The primary structure comprises 468 residues: Probable Xaa-Pro aminopeptidase PEPP (468 aa).

Residues Asp-264, Asp-275, Glu-398, and Glu-438 each contribute to the Mn(2+) site.

Belongs to the peptidase M24B family. The cofactor is Mn(2+).

It carries out the reaction Release of any N-terminal amino acid, including proline, that is linked to proline, even from a dipeptide or tripeptide.. In terms of biological role, catalyzes the removal of a penultimate prolyl residue from the N-termini of peptides. The protein is Probable Xaa-Pro aminopeptidase PEPP (PEPP) of Paracoccidioides lutzii (strain ATCC MYA-826 / Pb01) (Paracoccidioides brasiliensis).